The chain runs to 144 residues: MSTHIQRSALLPYPARALFDLVNDVKRYPEFLPWCSASQVLEESESLMRAELTVAKGSLSQRFTTRNVLVPGASIEMNLENGPFTELHGVWQFKALGEKACKITLDLTFDYAGPLVKATLGPLFTQAANTMVDAFCQRAKQLYG.

It belongs to the ribosome association toxin RatA family.

Toxic component of a type II toxin-antitoxin (TA) system. Binds to 50S ribosomal subunits, preventing them from associating with 30S subunits to form 70S ribosomes. Its antitoxin is unknown. The protein is Ribosome association toxin RatA (ratA) of Pseudomonas aeruginosa (strain ATCC 15692 / DSM 22644 / CIP 104116 / JCM 14847 / LMG 12228 / 1C / PRS 101 / PAO1).